A 603-amino-acid polypeptide reads, in one-letter code: Podocalyxin-like protein 2 (603 aa).

An N-terminal signal peptide occupies residues Met-1–Ala-28. The Extracellular segment spans residues Val-29–Thr-499. The interval Phe-53–Gln-92 is disordered. Ser-75 carries an O-linked (Xyl...) (chondroitin sulfate) serine glycan. Tyr-93 is subject to Sulfotyrosine. An N-linked (GlcNAc...) asparagine glycan is attached at Asn-101. Residue Tyr-113 is modified to Sulfotyrosine. The tract at residues Ser-124–Ser-368 is disordered. The span at Gln-156–Leu-187 shows a compositional bias: acidic residues. Positions Ala-196–Pro-216 are enriched in low complexity. Composition is skewed to polar residues over residues Val-240–Gly-266, Ala-302–Pro-314, and Asp-339–Trp-349. Asn-260 is a glycosylation site (N-linked (GlcNAc...) asparagine). An N-linked (GlcNAc...) asparagine glycan is attached at Asn-394. A helical membrane pass occupies residues Leu-500–Leu-520. The Cytoplasmic portion of the chain corresponds to Tyr-521 to Leu-603. Polar residues predominate over residues Asp-558–Leu-570. A disordered region spans residues Asp-558–Leu-603. Phosphoserine occurs at positions 569 and 594. Residues Glu-592–Leu-603 show a composition bias toward acidic residues.

This sequence belongs to the podocalyxin family. In terms of assembly, homodimer; disulfide-linked. Interacts with SELL, SELE and SELP. Glycosylated; contains chondroitin sulfate. Displays sialylated O-linked oligosaccharides. Post-translationally, sulfation is necessary for interaction with SELL. Sialylated O-linked oligosaccharides are necessary for interaction with SELL, SELE and SELP.

It localises to the membrane. Its function is as follows. Acts as a ligand for vascular selectins. Mediates rapid rolling of leukocytes over vascular surfaces through high affinity divalent cation-dependent interactions with E-, P- and L-selectins. This is Podocalyxin-like protein 2 (Podxl2) from Mus musculus (Mouse).